The following is a 156-amino-acid chain: D-aminoacyl-tRNA deacylase (156 aa).

The short motif at 142 to 143 (GP) is the Gly-cisPro motif, important for rejection of L-amino acids element.

Belongs to the DTD family. As to quaternary structure, homodimer.

The protein resides in the cytoplasm. It carries out the reaction glycyl-tRNA(Ala) + H2O = tRNA(Ala) + glycine + H(+). The enzyme catalyses a D-aminoacyl-tRNA + H2O = a tRNA + a D-alpha-amino acid + H(+). Functionally, an aminoacyl-tRNA editing enzyme that deacylates mischarged D-aminoacyl-tRNAs. Also deacylates mischarged glycyl-tRNA(Ala), protecting cells against glycine mischarging by AlaRS. Acts via tRNA-based rather than protein-based catalysis; rejects L-amino acids rather than detecting D-amino acids in the active site. By recycling D-aminoacyl-tRNA to D-amino acids and free tRNA molecules, this enzyme counteracts the toxicity associated with the formation of D-aminoacyl-tRNA entities in vivo and helps enforce protein L-homochirality. The protein is D-aminoacyl-tRNA deacylase of Cupriavidus pinatubonensis (strain JMP 134 / LMG 1197) (Cupriavidus necator (strain JMP 134)).